Consider the following 341-residue polypeptide: Tetraacyldisaccharide 4'-kinase (341 aa).

Threonine 54–threonine 61 contacts ATP.

This sequence belongs to the LpxK family.

The enzyme catalyses a lipid A disaccharide + ATP = a lipid IVA + ADP + H(+). The protein operates within glycolipid biosynthesis; lipid IV(A) biosynthesis; lipid IV(A) from (3R)-3-hydroxytetradecanoyl-[acyl-carrier-protein] and UDP-N-acetyl-alpha-D-glucosamine: step 6/6. Transfers the gamma-phosphate of ATP to the 4'-position of a tetraacyldisaccharide 1-phosphate intermediate (termed DS-1-P) to form tetraacyldisaccharide 1,4'-bis-phosphate (lipid IVA). This is Tetraacyldisaccharide 4'-kinase from Brucella melitensis biotype 1 (strain ATCC 23456 / CCUG 17765 / NCTC 10094 / 16M).